We begin with the raw amino-acid sequence, 233 residues long: Orotidine 5'-phosphate decarboxylase (233 aa).

Residues Asp13, Lys35, Asp62 to Thr71, Thr122, Arg182, Gln191, Gly211, and Arg212 contribute to the substrate site. The active-site Proton donor is the Lys64.

Belongs to the OMP decarboxylase family. Type 1 subfamily. Homodimer.

It catalyses the reaction orotidine 5'-phosphate + H(+) = UMP + CO2. It functions in the pathway pyrimidine metabolism; UMP biosynthesis via de novo pathway; UMP from orotate: step 2/2. Catalyzes the decarboxylation of orotidine 5'-monophosphate (OMP) to uridine 5'-monophosphate (UMP). The polypeptide is Orotidine 5'-phosphate decarboxylase (Pseudomonas putida (strain ATCC 700007 / DSM 6899 / JCM 31910 / BCRC 17059 / LMG 24140 / F1)).